The chain runs to 229 residues: GTP:AMP phosphotransferase (229 aa).

10 to 15 (GVGKGT) is a binding site for a ribonucleoside 5'-triphosphate. Residues 30–59 (NVGNILRNEIKKESNIGKEVQNVVRSGNLV) form an NMP region. AMP contacts are provided by residues Arg36, 57 to 59 (NLV), Gly87, 87 to 90 (GFPR), and Gln94. The segment at 123 to 170 (GRRICNICDKNFNVSNIQQDSFDMPPILPSKDCIQCNGHTNLIKRKDD) is LID. Arg178 serves as a coordination point for AMP.

Belongs to the adenylate kinase family.

Its subcellular location is the mitochondrion. The enzyme catalyses a ribonucleoside 5'-triphosphate + AMP = a ribonucleoside 5'-diphosphate + ADP. The catalysed reaction is GTP + AMP = GDP + ADP. With respect to regulation, inhibited by the dinucleoside pentaphosphate compound P1,P5-di(guanosine-5') pentaphosphate (GP5A). Functionally, catalyzes the reversible transfer of the terminal phosphate group between GTP and AMP. Has very low activity with UTP, ITP, CTP and IMP and no activity with ATP, GMP, CMP and UMP in vitro. In Plasmodium falciparum (isolate 3D7), this protein is GTP:AMP phosphotransferase.